The primary structure comprises 181 residues: Protein CENTRORADIALIS (181 aa).

It belongs to the phosphatidylethanolamine-binding protein family. As to quaternary structure, may form homodimers in solution.

Its subcellular location is the cytoplasm. Its function is as follows. Expression of CEN leads to a morphological switch between shoot growth and the development of flower structures (inflorescence). May form complexes with phosphorylated ligands by interfering with kinases and their effectors. In Antirrhinum majus (Garden snapdragon), this protein is Protein CENTRORADIALIS (CEN).